Here is a 61-residue protein sequence, read N- to C-terminus: Large ribosomal subunit protein uL30 (61 aa).

The protein belongs to the universal ribosomal protein uL30 family. As to quaternary structure, part of the 50S ribosomal subunit.

The sequence is that of Large ribosomal subunit protein uL30 from Fervidobacterium nodosum (strain ATCC 35602 / DSM 5306 / Rt17-B1).